Consider the following 273-residue polypeptide: Dermonecrotic toxin LapSicTox-alphaIB1bi (273 aa).

Histidine 5 is an active-site residue. Glutamate 25 and aspartate 27 together coordinate Mg(2+). Histidine 41 acts as the Nucleophile in catalysis. Cystine bridges form between cysteine 45/cysteine 51 and cysteine 47/cysteine 190. Aspartate 85 serves as a coordination point for Mg(2+). Residues asparagine 189 and asparagine 250 are each glycosylated (N-linked (GlcNAc...) asparagine).

This sequence belongs to the arthropod phospholipase D family. Class II subfamily. Mg(2+) serves as cofactor. In terms of tissue distribution, expressed by the venom gland.

The protein resides in the secreted. The catalysed reaction is an N-(acyl)-sphingosylphosphocholine = an N-(acyl)-sphingosyl-1,3-cyclic phosphate + choline. It catalyses the reaction an N-(acyl)-sphingosylphosphoethanolamine = an N-(acyl)-sphingosyl-1,3-cyclic phosphate + ethanolamine. The enzyme catalyses a 1-acyl-sn-glycero-3-phosphocholine = a 1-acyl-sn-glycero-2,3-cyclic phosphate + choline. It carries out the reaction a 1-acyl-sn-glycero-3-phosphoethanolamine = a 1-acyl-sn-glycero-2,3-cyclic phosphate + ethanolamine. Functionally, dermonecrotic toxins cleave the phosphodiester linkage between the phosphate and headgroup of certain phospholipids (sphingolipid and lysolipid substrates), forming an alcohol (often choline) and a cyclic phosphate. This toxin acts on sphingomyelin (SM). It may also act on ceramide phosphoethanolamine (CPE), lysophosphatidylcholine (LPC) and lysophosphatidylethanolamine (LPE), but not on lysophosphatidylserine (LPS), and lysophosphatidylglycerol (LPG). It acts by transphosphatidylation, releasing exclusively cyclic phosphate products as second products. Induces dermonecrosis, hemolysis, increased vascular permeability, edema, inflammatory response, and platelet aggregation. This Loxosceles apachea (Apache recluse spider) protein is Dermonecrotic toxin LapSicTox-alphaIB1bi.